We begin with the raw amino-acid sequence, 450 residues long: Cysteine protease ATG4C (450 aa).

Cys112 functions as the Nucleophile in the catalytic mechanism. Catalysis depends on residues Asp336 and His338.

This sequence belongs to the peptidase C54 family.

It localises to the cytoplasm. It carries out the reaction [protein]-C-terminal L-amino acid-glycyl-phosphatidylethanolamide + H2O = [protein]-C-terminal L-amino acid-glycine + a 1,2-diacyl-sn-glycero-3-phosphoethanolamine. Its function is as follows. Cysteine protease that plays a key role in autophagy by mediating both proteolytic activation and delipidation of ATG8 family proteins. The protease activity is required for proteolytic activation of ATG8 family proteins: cleaves the C-terminal amino acid of ATG8 proteins to reveal a C-terminal glycine. Exposure of the glycine at the C-terminus is essential for ATG8 proteins conjugation to phosphatidylethanolamine (PE) and insertion to membranes, which is necessary for autophagy. In addition to the protease activity, also mediates delipidation of ATG8 family proteins. Catalyzes delipidation of PE-conjugated forms of ATG8 proteins during macroautophagy. This Xenopus laevis (African clawed frog) protein is Cysteine protease ATG4C.